Here is a 263-residue protein sequence, read N- to C-terminus: Eukaryotic translation initiation factor 3 subunit J-B (263 aa).

Acidic residues-rich tracts occupy residues 1 to 13 and 30 to 50; these read MADS…DNFE and EGED…EEKE. 2 disordered regions span residues 1-75 and 214-235; these read MADS…DKIK and KQKQ…VPGG. A coiled-coil region spans residues 30 to 127; the sequence is EGEDEEEDVK…EADMELAREA (98 aa). A compositionally biased stretch (basic and acidic residues) spans 51-75; the sequence is EEKKVEQKIAEVKPPEKKKLSDKIK.

This sequence belongs to the eIF-3 subunit J family. Component of the eukaryotic translation initiation factor 3 (eIF-3) complex, which is composed of 13 subunits: eif3a, eif3b, eif3c, eif3d, eif3e, eif3f, eif3g, eif3h, eif3i, eif3j, eif3k, eif3l and eif3m.

It localises to the cytoplasm. Component of the eukaryotic translation initiation factor 3 (eIF-3) complex, which is involved in protein synthesis of a specialized repertoire of mRNAs and, together with other initiation factors, stimulates binding of mRNA and methionyl-tRNAi to the 40S ribosome. The eIF-3 complex specifically targets and initiates translation of a subset of mRNAs involved in cell proliferation. This chain is Eukaryotic translation initiation factor 3 subunit J-B (eif3jb), found in Danio rerio (Zebrafish).